A 204-amino-acid polypeptide reads, in one-letter code: MKAPPPFYEGDTLDVAKKLLGQKLVHIVDGVKRSGYIVEVEAYKGPDDKAAHSYGGRRTERTEIMFGAPGHAYVYLIYGMYHCFNVITAPVGIPQGVLIRALEPAEGVKEMKLARYGKMELTKTQYKNLTNGPGKLCRALNITLEERGLSLQGDKLYIELVPESQHLSSQYEIVKGPRINIDYAEEAVHYPWRFYFQNNPFISK.

Belongs to the DNA glycosylase MPG family.

The polypeptide is Putative 3-methyladenine DNA glycosylase (Bacillus cytotoxicus (strain DSM 22905 / CIP 110041 / 391-98 / NVH 391-98)).